Here is a 217-residue protein sequence, read N- to C-terminus: MKEHHIPKNSIITVAGTVGVGKSTLTKTLAKRLGFKTSLEEVDHNPYLEKFYHDFERWSFHLQIYFLAERFKEQKTIFEAGGGFVQDRSIYEDTGIFAKMHADKGTMSKVDYKTYTSLFEAMVMTPYFPHPDVLIYLEGDLENILNRIEQRGREMELQTSRSYWEEMHTRYENWISGFNACPVLKLRIEDYDLLNDENSIENIVDQIASVIHDNQKK.

16 to 24 contributes to the ATP binding site; it reads GTVGVGKST. Substrate contacts are provided by Glu-40, Tyr-52, and Gln-63. Asp-87 functions as the Proton acceptor in the catalytic mechanism. Positions 88, 93, and 156 each coordinate substrate.

Belongs to the DCK/DGK family. As to quaternary structure, homodimer.

The enzyme catalyses 2'-deoxyadenosine + ATP = dAMP + ADP + H(+). It carries out the reaction 2'-deoxycytidine + a ribonucleoside 5'-triphosphate = dCMP + a ribonucleoside 5'-diphosphate + H(+). Deoxyadenosine inhibits deoxycytidine phosphorylation and deoxycytidine inhibits deoxyadenosine phosphorylation. Deoxyadenosine/deoxycytidine kinase is inhibited by both dATP and dCTP. Plays an essential role in generating the deoxyribonucleotide precursors dATP and dCTP for DNA metabolism. The phosphate acceptor specificity is strict toward deoxyadenosine (dAdo) and deoxycytidine (dCyd). The specificity toward the sugar moiety of the nucleoside is less strict. Both 2-deoxyribose, ribose, and arabinose nucleosides are phosphorylated, although the 2-deoxyribonucleosides are preferred. The phosphate donor specificity is dependent on the deoxyribonucleoside substrate, but GTP is efficient with both deoxycytidine and deoxyadenosine. Only nucleoside triphosphates can act as phosphate donors. The chain is Deoxyadenosine/deoxycytidine kinase (dck) from Bacillus subtilis (strain 168).